The following is a 261-amino-acid chain: uncharacterized protein (261 aa).

The N-terminal stretch at 1 to 22 (MKSIKRIGLCISLLILIIFVTS) is a signal peptide. A lipid anchor (N-palmitoyl cysteine) is attached at Cys-23. Cys-23 is lipidated: S-diacylglycerol cysteine.

Belongs to the staphylococcal tandem lipoprotein family.

Its subcellular location is the cell membrane. This is an uncharacterized protein from Staphylococcus aureus (strain USA300).